The sequence spans 959 residues: UPF0182 protein MAE_41360 (959 aa).

9 consecutive transmembrane segments (helical) span residues 13 to 33 (PILL…VVAN), 50 to 70 (LSWQ…FIFT), 99 to 119 (LLGL…MLLY), 156 to 176 (DISS…GLLI), 184 to 204 (IISI…WANF), 239 to 259 (LWLT…YLFS), 276 to 296 (LRHL…HHII), 319 to 339 (VGQF…IWLG), and 362 to 382 (FFPY…GTII).

The protein belongs to the UPF0182 family.

It is found in the cell membrane. This Microcystis aeruginosa (strain NIES-843 / IAM M-2473) protein is UPF0182 protein MAE_41360.